Here is a 309-residue protein sequence, read N- to C-terminus: uncharacterized protein (309 aa).

One can recognise an S4 RNA-binding domain in the interval 11–87 (QRLDTFLATL…FPLDILYEDE (77 aa)). Asp131 is an active-site residue.

Belongs to the pseudouridine synthase RluA family.

It catalyses the reaction a uridine in RNA = a pseudouridine in RNA. This is an uncharacterized protein from Mycoplasma pneumoniae (strain ATCC 29342 / M129 / Subtype 1) (Mycoplasmoides pneumoniae).